The chain runs to 502 residues: ATP synthase subunit alpha (502 aa).

Position 169–176 (169–176 (GDRQTGKT)) interacts with ATP.

The protein belongs to the ATPase alpha/beta chains family. F-type ATPases have 2 components, CF(1) - the catalytic core - and CF(0) - the membrane proton channel. CF(1) has five subunits: alpha(3), beta(3), gamma(1), delta(1), epsilon(1). CF(0) has three main subunits: a(1), b(2) and c(9-12). The alpha and beta chains form an alternating ring which encloses part of the gamma chain. CF(1) is attached to CF(0) by a central stalk formed by the gamma and epsilon chains, while a peripheral stalk is formed by the delta and b chains.

It is found in the cell membrane. The catalysed reaction is ATP + H2O + 4 H(+)(in) = ADP + phosphate + 5 H(+)(out). In terms of biological role, produces ATP from ADP in the presence of a proton gradient across the membrane. The alpha chain is a regulatory subunit. This Bacillus sp. (strain PS3) protein is ATP synthase subunit alpha.